The sequence spans 603 residues: Elongation factor 4 (603 aa).

In terms of domain architecture, tr-type G spans 7–189; it reads KKIRNFCIIA…SVVKNVPPPE (183 aa). GTP-binding positions include 19–24 and 136–139; these read DHGKST and NKID.

It belongs to the TRAFAC class translation factor GTPase superfamily. Classic translation factor GTPase family. LepA subfamily.

It localises to the cell membrane. It catalyses the reaction GTP + H2O = GDP + phosphate + H(+). Required for accurate and efficient protein synthesis under certain stress conditions. May act as a fidelity factor of the translation reaction, by catalyzing a one-codon backward translocation of tRNAs on improperly translocated ribosomes. Back-translocation proceeds from a post-translocation (POST) complex to a pre-translocation (PRE) complex, thus giving elongation factor G a second chance to translocate the tRNAs correctly. Binds to ribosomes in a GTP-dependent manner. The polypeptide is Elongation factor 4 (Acetivibrio thermocellus (strain ATCC 27405 / DSM 1237 / JCM 9322 / NBRC 103400 / NCIMB 10682 / NRRL B-4536 / VPI 7372) (Clostridium thermocellum)).